The sequence spans 115 residues: Phosphoribosyl-AMP cyclohydrolase (115 aa).

D80 lines the Mg(2+) pocket. C81 lines the Zn(2+) pocket. Mg(2+) is bound by residues D82 and D84. 2 residues coordinate Zn(2+): C97 and C104.

The protein belongs to the PRA-CH family. Homodimer. The cofactor is Mg(2+). It depends on Zn(2+) as a cofactor.

The protein resides in the cytoplasm. The enzyme catalyses 1-(5-phospho-beta-D-ribosyl)-5'-AMP + H2O = 1-(5-phospho-beta-D-ribosyl)-5-[(5-phospho-beta-D-ribosylamino)methylideneamino]imidazole-4-carboxamide. Its pathway is amino-acid biosynthesis; L-histidine biosynthesis; L-histidine from 5-phospho-alpha-D-ribose 1-diphosphate: step 3/9. Functionally, catalyzes the hydrolysis of the adenine ring of phosphoribosyl-AMP. In Mycobacterium avium (strain 104), this protein is Phosphoribosyl-AMP cyclohydrolase.